A 174-amino-acid chain; its full sequence is Ubiquitin-fold modifier-conjugating enzyme 1 (174 aa).

Cys119 functions as the Glycyl thioester intermediate in the catalytic mechanism.

It belongs to the ubiquitin-conjugating enzyme family. UFC1 subfamily.

E2-like enzyme which forms an intermediate with UFM1 via a thioester linkage. In Arabidopsis thaliana (Mouse-ear cress), this protein is Ubiquitin-fold modifier-conjugating enzyme 1.